A 140-amino-acid polypeptide reads, in one-letter code: Large ribosomal subunit protein bL17 (140 aa).

The protein belongs to the bacterial ribosomal protein bL17 family. Part of the 50S ribosomal subunit. Contacts protein L32.

The protein is Large ribosomal subunit protein bL17 of Rhizobium rhizogenes (strain K84 / ATCC BAA-868) (Agrobacterium radiobacter).